Here is a 144-residue protein sequence, read N- to C-terminus: uncharacterized protein (144 aa).

A signal peptide spans 1-23; that stretch reads MRKILLFATVIGFLIMVSGTLSY.

This is an uncharacterized protein from Archaeoglobus fulgidus (strain ATCC 49558 / DSM 4304 / JCM 9628 / NBRC 100126 / VC-16).